Reading from the N-terminus, the 287-residue chain is ATP synthase gamma chain (287 aa).

This sequence belongs to the ATPase gamma chain family. In terms of assembly, F-type ATPases have 2 components, CF(1) - the catalytic core - and CF(0) - the membrane proton channel. CF(1) has five subunits: alpha(3), beta(3), gamma(1), delta(1), epsilon(1). CF(0) has three main subunits: a, b and c.

The protein resides in the cell membrane. In terms of biological role, produces ATP from ADP in the presence of a proton gradient across the membrane. The gamma chain is believed to be important in regulating ATPase activity and the flow of protons through the CF(0) complex. This chain is ATP synthase gamma chain, found in Mycoplasmopsis agalactiae (strain NCTC 10123 / CIP 59.7 / PG2) (Mycoplasma agalactiae).